The primary structure comprises 421 residues: GTPase Obg (421 aa).

One can recognise an Obg domain in the interval Leu-4–Leu-161. The region spanning Ala-162 to Gln-327 is the OBG-type G domain. GTP is bound by residues Gly-168–Ser-175, Phe-193–Phe-197, Asp-214–Gly-217, Asn-281–Asp-284, and Ser-308–Ile-310. 2 residues coordinate Mg(2+): Ser-175 and Thr-195. The 79-residue stretch at Asp-343–Ile-421 folds into the OCT domain.

This sequence belongs to the TRAFAC class OBG-HflX-like GTPase superfamily. OBG GTPase family. As to quaternary structure, monomer. Requires Mg(2+) as cofactor.

It localises to the cytoplasm. Functionally, an essential GTPase which binds GTP, GDP and possibly (p)ppGpp with moderate affinity, with high nucleotide exchange rates and a fairly low GTP hydrolysis rate. Plays a role in control of the cell cycle, stress response, ribosome biogenesis and in those bacteria that undergo differentiation, in morphogenesis control. This Phytoplasma australiense protein is GTPase Obg.